Reading from the N-terminus, the 961-residue chain is Phosphofurin acidic cluster sorting protein 1 (961 aa).

Positions 1–19 (MAERGGAGGGPGGAGGGSS) are enriched in gly residues. Disordered stretches follow at residues 1–70 (MAER…SSST) and 76–95 (VAVA…RTPA). Position 2 is an N-acetylalanine (Ala-2). Residues 20-30 (QRGSGVAQSPQ) are compositionally biased toward low complexity. Ser-28 carries the post-translational modification Phosphoserine. Residues 31–46 (QQPPQQPSQPQQPTPP) are compositionally biased toward pro residues. Thr-44 carries the phosphothreonine modification. The segment covering 51-70 (ATSSSSSTSAAAASSSSSST) has biased composition (low complexity). At Tyr-249 the chain carries Phosphotyrosine. Over residues 260 to 271 (GIKSKLSDRSPD) the composition is skewed to basic and acidic residues. Disordered stretches follow at residues 260–297 (GIKS…LHGQ) and 375–426 (NPSD…GKDT). Acidic residues predominate over residues 274-291 (NYSEEEEESFSSEQEGSD). Residues 351-375 (HVSREQIREVEEDLDELYDSLEMYN) adopt a coiled-coil conformation. Ser-377 and Ser-379 each carry phosphoserine. Positions 404 to 426 (MSQSSSQTEIGSLNSKGSLGKDT) are enriched in polar residues. A phosphoserine mark is found at Ser-428 and Ser-493. Disordered regions lie at residues 475-540 (EKVK…HSTQ) and 758-802 (SPST…SMSS). At Thr-502 the chain carries Phosphothreonine. 5 positions are modified to phosphoserine: Ser-517, Ser-526, Ser-527, Ser-529, and Ser-532. The span at 768–802 (SPVVSLTVPSTSPPSSSGLSRDATATPPSSPSMSS) shows a compositional bias: low complexity.

Belongs to the PACS family. Associates with AP-1 and AP-3 but not with AP-2 complexes. Interacts with FURIN. Forms a ternary complex with furin and AP-1. Interacts with PKD2 (via acidic region). Interacts with SORL1. Interacts with WDR37.

The protein resides in the golgi apparatus. Its subcellular location is the trans-Golgi network. In terms of biological role, coat protein that is involved in the localization of trans-Golgi network (TGN) membrane proteins that contain acidic cluster sorting motifs. Controls the endosome-to-Golgi trafficking of furin and mannose-6-phosphate receptor by connecting the acidic-cluster-containing cytoplasmic domain of these molecules with the adapter-protein complex-1 (AP-1) of endosomal clathrin-coated membrane pits. Required for normal ER Ca2+ handling in lymphocytes. Together with WDR37, it plays an essential role in lymphocyte development, quiescence and survival. Required for stabilizing peripheral lymphocyte populations. The chain is Phosphofurin acidic cluster sorting protein 1 (Pacs1) from Rattus norvegicus (Rat).